Here is a 153-residue protein sequence, read N- to C-terminus: NAD(P)H-quinone oxidoreductase subunit N (153 aa).

This sequence belongs to the complex I NdhN subunit family. NDH-1 can be composed of about 15 different subunits; different subcomplexes with different compositions have been identified which probably have different functions.

Its subcellular location is the cellular thylakoid membrane. It catalyses the reaction a plastoquinone + NADH + (n+1) H(+)(in) = a plastoquinol + NAD(+) + n H(+)(out). The catalysed reaction is a plastoquinone + NADPH + (n+1) H(+)(in) = a plastoquinol + NADP(+) + n H(+)(out). NDH-1 shuttles electrons from an unknown electron donor, via FMN and iron-sulfur (Fe-S) centers, to quinones in the respiratory and/or the photosynthetic chain. The immediate electron acceptor for the enzyme in this species is believed to be plastoquinone. Couples the redox reaction to proton translocation, and thus conserves the redox energy in a proton gradient. Cyanobacterial NDH-1 also plays a role in inorganic carbon-concentration. This Prochlorococcus marinus (strain MIT 9303) protein is NAD(P)H-quinone oxidoreductase subunit N.